Reading from the N-terminus, the 134-residue chain is Small ribosomal subunit protein bS6 (134 aa).

This sequence belongs to the bacterial ribosomal protein bS6 family.

In terms of biological role, binds together with bS18 to 16S ribosomal RNA. This is Small ribosomal subunit protein bS6 from Chlorobium phaeobacteroides (strain BS1).